The sequence spans 181 residues: Ribulose bisphosphate carboxylase small subunit, chloroplastic 2 (181 aa).

Residues 1–57 constitute a chloroplast transit peptide; the sequence is MAFLIMSSAAAVATGTNAAQASMIAPFTGLKSATSFPVSRKQNLDITSIASNGGRVQ.

The protein belongs to the RuBisCO small chain family. In terms of assembly, heterohexadecamer of 8 large and 8 small subunits.

The protein localises to the plastid. It localises to the chloroplast. Functionally, ruBisCO catalyzes two reactions: the carboxylation of D-ribulose 1,5-bisphosphate, the primary event in carbon dioxide fixation, as well as the oxidative fragmentation of the pentose substrate. Both reactions occur simultaneously and in competition at the same active site. Although the small subunit is not catalytic it is essential for maximal activity. This is Ribulose bisphosphate carboxylase small subunit, chloroplastic 2 from Nicotiana sylvestris (Wood tobacco).